Here is a 74-residue protein sequence, read N- to C-terminus: Conotoxin ArMKLT2-041 (74 aa).

Positions 1–22 (MKLTCVLIVAVLFLTACQLIAA) are cleaved as a signal peptide. The propeptide occupies 23–46 (DDSRDLQKFPRRKMRDGMLNTKNT). Gln49 bears the Pyrrolidone carboxylic acid mark. Intrachain disulfides connect Cys50–Cys65, Cys57–Cys68, and Cys64–Cys73.

The protein belongs to the conotoxin O1 superfamily. In terms of tissue distribution, expressed by the venom duct.

The protein localises to the secreted. The chain is Conotoxin ArMKLT2-041 from Conus arenatus (Sand-dusted cone).